Reading from the N-terminus, the 311-residue chain is Retron Ec78 reverse transcriptase (311 aa).

The 227-residue stretch at 15-241 (DSGISAFLVT…HNRHVTGVTI (227 aa)) folds into the Reverse transcriptase domain. 3 residues coordinate Mg(2+): Asp96, Asp187, and Asp188.

Belongs to the bacterial reverse transcriptase family.

The catalysed reaction is DNA(n) + a 2'-deoxyribonucleoside 5'-triphosphate = DNA(n+1) + diphosphate. Reverse transcriptase (RT) component of antiviral defense system retron Ec78, composed of a non-coding RNA (ncRNA), this reverse transcriptase (RT), a probable ATPase and a putative HNH endonuclease. Expression of retron Ec78 confers protection against bacteriophage T5. At multiplicity of infection (MOI) of 0.02 cultures slow growth when infected with T5 but do not collapse, at MOI 2 cultures enter growth stasis. Responsible for synthesis of msDNA-Ec78 (a linear ssDNA with a 5'-terminal phosphate residue). Unlike most known msDNAs the mature product does not have an RNA component. The retron transcript serves as primer and template for the reaction, and codes for the RT. Not mutagenic when cloned in E.coli. It is thought to be synthesized as a branched RNA with a 2',5'-phosphodiester linkage to ssDNA; the linkage is cleaved endonucleolytically by ExoVII (xseA-xseB) leaving the observed mature 5'-ssDNA terminus. Overexpression of the ncRNA and RT, which leads to increased levels of msDNA, is not mutagenic in vivo. As the stem in the msDNA does not have a mismatch it probably does not bind or sequester MutS and/or MutL. This Escherichia coli protein is Retron Ec78 reverse transcriptase.